A 445-amino-acid chain; its full sequence is tRNA modification GTPase MnmE (445 aa).

Residues Arg-20, Glu-79, and Lys-119 each coordinate (6S)-5-formyl-5,6,7,8-tetrahydrofolate. In terms of domain architecture, TrmE-type G spans 215-371 (GLKLAIIGPP…ILKNIEEIAE (157 aa)). Asn-225 is a binding site for K(+). Residues 225–230 (NAGKSS), 244–250 (SNIAGTT), and 269–272 (DTAG) contribute to the GTP site. Ser-229 lines the Mg(2+) pocket. The K(+) site is built by Ser-244, Ile-246, and Thr-249. Mg(2+) is bound at residue Thr-250. Residue Lys-445 participates in (6S)-5-formyl-5,6,7,8-tetrahydrofolate binding.

It belongs to the TRAFAC class TrmE-Era-EngA-EngB-Septin-like GTPase superfamily. TrmE GTPase family. In terms of assembly, homodimer. Heterotetramer of two MnmE and two MnmG subunits. K(+) is required as a cofactor.

The protein localises to the cytoplasm. Functionally, exhibits a very high intrinsic GTPase hydrolysis rate. Involved in the addition of a carboxymethylaminomethyl (cmnm) group at the wobble position (U34) of certain tRNAs, forming tRNA-cmnm(5)s(2)U34. This chain is tRNA modification GTPase MnmE, found in Rickettsia bellii (strain OSU 85-389).